Here is a 116-residue protein sequence, read N- to C-terminus: Putative anti-sigma factor antagonist BtrV (116 aa).

The 110-residue stretch at 1–110 folds into the STAS domain; the sequence is MKLTMDKIDG…NSREAAAAAF (110 aa). Phosphoserine; by BtrW is present on serine 55.

This sequence belongs to the anti-sigma-factor antagonist family. As to quaternary structure, interacts with BtrW. In terms of processing, phosphorylated by BtrW. Dephosphorylated by BtrU.

In terms of biological role, possible positive regulator of sigma-B activity. Non-phosphorylated BtrV binds to BtrW, preventing its association with an unknown partner(s) that might be sigma-B. When phosphorylated, releases BtrW, which is then free to complex with and inactivate its partner. Involved in type III secretion system (T3SS). The protein is Putative anti-sigma factor antagonist BtrV (btrV) of Bordetella bronchiseptica (strain ATCC BAA-588 / NCTC 13252 / RB50) (Alcaligenes bronchisepticus).